Consider the following 134-residue polypeptide: Cytochrome b5 (134 aa).

Position 2 is an N-acetylalanine (Ala-2). Residues Lys-7, Lys-10, and Lys-19 each carry the N6-acetyllysine modification. Positions Val-9–His-85 constitute a Cytochrome b5 heme-binding domain. The heme site is built by His-44 and His-68. A helical transmembrane segment spans residues Trp-109–Thr-131.

This sequence belongs to the cytochrome b5 family.

Its subcellular location is the endoplasmic reticulum membrane. The protein localises to the microsome membrane. Functionally, cytochrome b5 is a membrane-bound hemoprotein functioning as an electron carrier for several membrane-bound oxygenases. This chain is Cytochrome b5 (CYB5A), found in Bos taurus (Bovine).